Consider the following 301-residue polypeptide: NADH-cytochrome b5 reductase 3 (301 aa).

A lipid anchor (N-myristoyl glycine) is attached at glycine 2. The region spanning 40-152 (DIKYSLRLID…RGPNGLLVYQ (113 aa)) is the FAD-binding FR-type domain. An N6-acetyllysine modification is found at lysine 42. Position 43 is a phosphotyrosine (tyrosine 43). Residues arginine 92, proline 93, tyrosine 94, valine 109, lysine 111, and phenylalanine 114 each contribute to the FAD site. Lysine 120 is subject to N6-acetyllysine. FAD is bound by residues lysine 126, methionine 127, serine 128, and threonine 185.

It belongs to the flavoprotein pyridine nucleotide cytochrome reductase family. As to quaternary structure, component of a complex composed of cytochrome b5, NADH-cytochrome b5 reductase (CYB5R3) and MTARC2. Interacts with MTLN; the interaction is required to maintain cellular lipid composition and leads to stimulation of mitochondrial respiratory complex I activity. FAD serves as cofactor.

The protein resides in the endoplasmic reticulum membrane. It is found in the mitochondrion outer membrane. It catalyses the reaction 2 Fe(III)-[cytochrome b5] + NADH = 2 Fe(II)-[cytochrome b5] + NAD(+) + H(+). Its function is as follows. Catalyzes the reduction of two molecules of cytochrome b5 using NADH as the electron donor. The sequence is that of NADH-cytochrome b5 reductase 3 (CYB5R3) from Macaca fascicularis (Crab-eating macaque).